Reading from the N-terminus, the 254-residue chain is DNA repair protein RecO (254 aa).

This sequence belongs to the RecO family.

In terms of biological role, involved in DNA repair and RecF pathway recombination. The sequence is that of DNA repair protein RecO from Anaeromyxobacter dehalogenans (strain 2CP-1 / ATCC BAA-258).